The primary structure comprises 466 residues: Muscarinic acetylcholine receptor M2 (466 aa).

The Extracellular portion of the chain corresponds to 1–25 (MNNSTYINSSSENVIALESPYKTIE). Residues Asn2, Asn3, and Asn8 are each glycosylated (N-linked (GlcNAc...) asparagine). Residues 26-48 (VVFIVLVAGSLSLVTIIGNILVM) form a helical membrane-spanning segment. Over 49–62 (VSIKVNRHLQTVNN) the chain is Cytoplasmic. Residues 63–83 (YFLFSLACADLIIGIFSMNLY) traverse the membrane as a helical segment. Topologically, residues 84–100 (TLYTVIGYWPLGPVVCD) are extracellular. Cys99 and Cys179 are joined by a disulfide. The chain crosses the membrane as a helical span at residues 101–122 (LWLALDYVVSNASVMNLLIISF). An Important for signaling motif is present at residues 123 to 125 (DRY). Residues 123 to 142 (DRYFCVTKPLTYPVKRTTKM) are Cytoplasmic-facing. The chain crosses the membrane as a helical span at residues 143–165 (AGMMIAAAWVLSFILWAPAILFW). Residues 166-187 (QFIVGGRTVPDKDCYIQFFSNP) are Extracellular-facing. A helical membrane pass occupies residues 188 to 212 (AVTFGTAIAAFYLPVIIMTVLYWQI). Topologically, residues 213–387 (SRASKSRIKK…PPSREKKVTR (175 aa)) are cytoplasmic. Disordered stretches follow at residues 223-265 (GKKE…KVQN) and 279-315 (QGEE…SASQ). 2 stretches are compositionally biased toward polar residues: residues 228 to 238 (AQNQDPVSPSL) and 246 to 256 (PNNNNIPTSSD). Residues 287–298 (NDSTSVSVVPSN) show a composition bias toward low complexity. Residues 388–410 (TILAILLAFIITWTPYNVMVLIN) form a helical membrane-spanning segment. Residues 411 to 418 (SFCASCIP) are Extracellular-facing. Cys413 and Cys416 are oxidised to a cystine. The helical transmembrane segment at 419 to 442 (GTVWTIGYWLCYINSTINPACYAL) threads the bilayer. The Important for signaling signature appears at 436-440 (NPACY). Residues 443-466 (CNATFKKTFKHLLMCHYKNIGATR) are Cytoplasmic-facing. Thr446, Thr450, and Thr465 each carry phosphothreonine.

This sequence belongs to the G-protein coupled receptor 1 family. Muscarinic acetylcholine receptor subfamily. CHRM2 sub-subfamily.

It is found in the cell membrane. It localises to the postsynaptic cell membrane. The muscarinic acetylcholine receptor mediates various cellular responses, including inhibition of adenylate cyclase, breakdown of phosphoinositides and modulation of potassium channels through the action of G proteins. Primary transducing effect is adenylate cyclase inhibition. Signaling promotes phospholipase C activity, leading to the release of inositol trisphosphate (IP3); this then triggers calcium ion release into the cytosol. In Gallus gallus (Chicken), this protein is Muscarinic acetylcholine receptor M2 (CHRM2).